Reading from the N-terminus, the 381-residue chain is Queuine tRNA-ribosyltransferase (381 aa).

D92 acts as the Proton acceptor in catalysis. Substrate contacts are provided by residues 92–96 (DSGGF), D146, Q190, and G217. Residues 248–254 (GVGRPED) are RNA binding. The Nucleophile role is filled by D267. The interval 272–276 (TRNAR) is RNA binding; important for wobble base 34 recognition. Residues C305, C307, C310, and H337 each coordinate Zn(2+).

This sequence belongs to the queuine tRNA-ribosyltransferase family. Homodimer. Within each dimer, one monomer is responsible for RNA recognition and catalysis, while the other monomer binds to the replacement base PreQ1. Requires Zn(2+) as cofactor.

It catalyses the reaction 7-aminomethyl-7-carbaguanine + guanosine(34) in tRNA = 7-aminomethyl-7-carbaguanosine(34) in tRNA + guanine. It functions in the pathway tRNA modification; tRNA-queuosine biosynthesis. In terms of biological role, catalyzes the base-exchange of a guanine (G) residue with the queuine precursor 7-aminomethyl-7-deazaguanine (PreQ1) at position 34 (anticodon wobble position) in tRNAs with GU(N) anticodons (tRNA-Asp, -Asn, -His and -Tyr). Catalysis occurs through a double-displacement mechanism. The nucleophile active site attacks the C1' of nucleotide 34 to detach the guanine base from the RNA, forming a covalent enzyme-RNA intermediate. The proton acceptor active site deprotonates the incoming PreQ1, allowing a nucleophilic attack on the C1' of the ribose to form the product. After dissociation, two additional enzymatic reactions on the tRNA convert PreQ1 to queuine (Q), resulting in the hypermodified nucleoside queuosine (7-(((4,5-cis-dihydroxy-2-cyclopenten-1-yl)amino)methyl)-7-deazaguanosine). The chain is Queuine tRNA-ribosyltransferase from Xanthomonas oryzae pv. oryzae (strain MAFF 311018).